A 209-amino-acid chain; its full sequence is MTRFVLGSASQGRLGVLRQAGIDPEVVVSDVDEDALLASLDPELPPEAVVAKLANAKALSVAAALPQELLADCVVLGCDSMLYLDGRLSGKPGTPEAARRQWEQMAGTTGHLLTGHALLRLRDGVITHTEGDTGSTAVHFGRPSEAELTRYVDSGEPIHVAGAFTLDGLGGWFIDGIDGDPSNVIGVSLPLVQRLISRTGLSISEFWTR.

The active-site Proton acceptor is Asp79.

The protein belongs to the Maf family. It depends on a divalent metal cation as a cofactor.

The protein resides in the cytoplasm. It carries out the reaction a ribonucleoside 5'-triphosphate + H2O = a ribonucleoside 5'-phosphate + diphosphate + H(+). The enzyme catalyses a 2'-deoxyribonucleoside 5'-triphosphate + H2O = a 2'-deoxyribonucleoside 5'-phosphate + diphosphate + H(+). Its function is as follows. Nucleoside triphosphate pyrophosphatase. May have a dual role in cell division arrest and in preventing the incorporation of modified nucleotides into cellular nucleic acids. In Mycolicibacterium gilvum (strain PYR-GCK) (Mycobacterium gilvum (strain PYR-GCK)), this protein is Nucleoside triphosphate pyrophosphatase.